A 361-amino-acid polypeptide reads, in one-letter code: Replication-associated protein (361 aa).

The disordered stretch occupies residues 1-31 (MSSLPVSESEGEGSGTSVQVPSRGGQVTPGE). The 104-residue stretch at 35 to 138 (SLRTKHVFLT…PESSWEFGKF (104 aa)) folds into the CRESS-DNA virus Rep endonuclease domain. The RCR-1 signature appears at 42-45 (FLTY). 3 residues coordinate a divalent metal cation: Glu-76, His-84, and His-86. An RCR-2 motif is present at residues 84 to 86 (HLH). Tyr-124 (for DNA cleavage activity) is an active-site residue. Residues 124 to 127 (YCMK) carry the RCR-3 motif. Residues 192–204 (SANALFPDPPQTY) are oligomerization. ATP is bound at residue 243–250 (GPTRTGKT). The tract at residues 266-285 (VNFLEEWNCQAQFNIIDDIP) is transactivation. The Nuclear localization signal signature appears at 307-317 (KYGKKKRIPNG).

This sequence belongs to the geminiviridae Rep protein family. As to quaternary structure, homooligomer. Rep binds to repeated DNA motifs (iterons). Forms the O-complex, which is a Rep-DNA complex involved in the initiation of RCR. Part of the C- and V-complexes which are RepA-Rep-DNA complexes involved in the c-sense and v-sense transcription. The cofactor is Mg(2+). Requires Mn(2+) as cofactor.

It localises to the host nucleus. In terms of biological role, essential for the replication of viral ssDNA. The closed circular ssDNA genome is first converted to a superhelical dsDNA. Rep binds a specific region at the genome origin of replication. It introduces an endonucleolytic nick within the conserved sequence 5'-TAATATTAC-3' in the intergenic region of the genome present in all geminiviruses, thereby initiating the rolling circle replication (RCR). Following cleavage, binds covalently to the 5'-phosphate of DNA as a tyrosyl ester. The cleavage gives rise to a free 3'-OH that serves as a primer for the cellular DNA polymerase. The polymerase synthesizes the (+) strand DNA by rolling circle mechanism. After one round of replication, a Rep-catalyzed nucleotidyl transfer reaction releases a circular single-stranded virus genome, thereby terminating the replication. Displays origin-specific DNA cleavage, nucleotidyl transferase, ATPase and helicase activities. Acts as an inhibitor of C-sense gene transcription. The chain is Replication-associated protein from Avena sativa (Oat).